A 268-amino-acid polypeptide reads, in one-letter code: Imidazole glycerol phosphate synthase subunit HisF (268 aa).

Active-site residues include Asp-12 and Asp-131.

Belongs to the HisA/HisF family. As to quaternary structure, heterodimer of HisH and HisF.

It localises to the cytoplasm. It catalyses the reaction 5-[(5-phospho-1-deoxy-D-ribulos-1-ylimino)methylamino]-1-(5-phospho-beta-D-ribosyl)imidazole-4-carboxamide + L-glutamine = D-erythro-1-(imidazol-4-yl)glycerol 3-phosphate + 5-amino-1-(5-phospho-beta-D-ribosyl)imidazole-4-carboxamide + L-glutamate + H(+). The protein operates within amino-acid biosynthesis; L-histidine biosynthesis; L-histidine from 5-phospho-alpha-D-ribose 1-diphosphate: step 5/9. In terms of biological role, IGPS catalyzes the conversion of PRFAR and glutamine to IGP, AICAR and glutamate. The HisF subunit catalyzes the cyclization activity that produces IGP and AICAR from PRFAR using the ammonia provided by the HisH subunit. This is Imidazole glycerol phosphate synthase subunit HisF from Methanocorpusculum labreanum (strain ATCC 43576 / DSM 4855 / Z).